The following is a 189-amino-acid chain: Elongation factor P (189 aa).

Residue lysine 34 is modified to N6-(3,6-diaminohexanoyl)-5-hydroxylysine.

This sequence belongs to the elongation factor P family. May be beta-lysylated on the epsilon-amino group of Lys-34 by the combined action of EpmA and EpmB, and then hydroxylated on the C5 position of the same residue by EpmC (if this protein is present). Lysylation is critical for the stimulatory effect of EF-P on peptide-bond formation. The lysylation moiety may extend toward the peptidyltransferase center and stabilize the terminal 3-CCA end of the tRNA. Hydroxylation of the C5 position on Lys-34 may allow additional potential stabilizing hydrogen-bond interactions with the P-tRNA.

The protein localises to the cytoplasm. The protein operates within protein biosynthesis; polypeptide chain elongation. In terms of biological role, involved in peptide bond synthesis. Alleviates ribosome stalling that occurs when 3 or more consecutive Pro residues or the sequence PPG is present in a protein, possibly by augmenting the peptidyl transferase activity of the ribosome. Modification of Lys-34 is required for alleviation. The protein is Elongation factor P of Francisella tularensis subsp. tularensis (strain FSC 198).